Consider the following 63-residue polypeptide: Juvenile hormone esterase, isoform B (63 aa).

N-linked (GlcNAc...) asparagine glycosylation occurs at asparagine 20.

Belongs to the type-B carboxylesterase/lipase family. As to expression, fat body, the site of their biosynthesis, and the hemolymph where it is secreted.

It catalyses the reaction juvenile hormone I + H2O = juvenile hormone I carboxylate + methanol + H(+). The catalysed reaction is juvenile hormone III + H2O = juvenile hormone III carboxylate + methanol + H(+). In terms of biological role, JH esterase plays a crucial role in the decrease of JH activity in lepidopteran insects, by hydrolyzing the methyl ester of JH. It is also involved in the transport of JH. This Trichoplusia ni (Cabbage looper) protein is Juvenile hormone esterase, isoform B.